Here is a 95-residue protein sequence, read N- to C-terminus: Aspartyl/glutamyl-tRNA(Asn/Gln) amidotransferase subunit C (95 aa).

It belongs to the GatC family. In terms of assembly, heterotrimer of A, B and C subunits.

It catalyses the reaction L-glutamyl-tRNA(Gln) + L-glutamine + ATP + H2O = L-glutaminyl-tRNA(Gln) + L-glutamate + ADP + phosphate + H(+). The enzyme catalyses L-aspartyl-tRNA(Asn) + L-glutamine + ATP + H2O = L-asparaginyl-tRNA(Asn) + L-glutamate + ADP + phosphate + 2 H(+). Allows the formation of correctly charged Asn-tRNA(Asn) or Gln-tRNA(Gln) through the transamidation of misacylated Asp-tRNA(Asn) or Glu-tRNA(Gln) in organisms which lack either or both of asparaginyl-tRNA or glutaminyl-tRNA synthetases. The reaction takes place in the presence of glutamine and ATP through an activated phospho-Asp-tRNA(Asn) or phospho-Glu-tRNA(Gln). This chain is Aspartyl/glutamyl-tRNA(Asn/Gln) amidotransferase subunit C, found in Caulobacter sp. (strain K31).